A 256-amino-acid chain; its full sequence is Low molecular mass lipoprotein 3 (256 aa).

The N-terminal stretch at 1 to 17 (MKPAIVILCLFVASLYA) is a signal peptide.

It belongs to the 30 kDa lipoprotein family. In terms of tissue distribution, detected in larval hemolymph (at protein level).

It is found in the secreted. This Bombyx mori (Silk moth) protein is Low molecular mass lipoprotein 3.